Here is a 938-residue protein sequence, read N- to C-terminus: Auxilin (938 aa).

The tract at residues 19 to 41 (AAAGENRMKDSENKGASSPDMEP) is disordered. 3 consecutive repeat copies span residues 61-64 (NLKD), 65-68 (NLKD), and 69-72 (TLKD). A 3 X 4 AA approximate tandem repeats region spans residues 61 to 72 (NLKDNLKDTLKD). In terms of domain architecture, Phosphatase tensin-type spans 80 to 247 (SVSSYTKGDL…GYMCDLLADK (168 aa)). Ser-137 carries the phosphoserine modification. Cys-189 serves as the catalytic Phosphocysteine intermediate. Positions 253 to 391 (FKPLTIKAIT…FQVTLDIEVQ (139 aa)) constitute a C2 tensin-type domain. The short motif at 434–442 (PADLPPDHP) is the SH3-binding element. A disordered region spans residues 467–801 (EEDHAALVNQ…GKGSTNLEGK (335 aa)). Phosphoserine is present on residues Ser-478 and Ser-481. Positions 531-548 (DVSTNFSSLAAPPSNSEL) are enriched in polar residues. Over residues 559 to 569 (TGPAQAGQAGV) the composition is skewed to low complexity. 2 stretches are compositionally biased toward polar residues: residues 579–596 (VSAQ…SASP) and 624–654 (FLNT…TPAV). Ser-595 is subject to Phosphoserine. Positions 679-694 (SAATSPTGSSHGTPTH) are enriched in low complexity. Residues 754-781 (NWQQTQSKPQSSMPHSSPQNRPNYNVSF) show a composition bias toward polar residues. In terms of domain architecture, J spans 874-938 (TKWKPVGMAD…FENQGQKPLY (65 aa)).

As to quaternary structure, forms a complex composed of HSPA8, CLTC and DNAJC6. Interacts with HSPA8/HSC70 in an ATP-dependent manner; this interaction stimulates the HSPA8's ATPase activity. Interacts with CLTC; this interaction produces a local change in heavy-chain contacts, creating a detectable global distortion of the clathrin coat. Interacts with AP2A2. Interacts with DNM1(GTP-bound form); this interaction allows clathrin-coated vesicle (CCV) formation at the plasma membrane. In terms of processing, the N-terminus is blocked. Post-translationally, phosphorylation at Ser-595 modulates its ability to bind CLTC and therefore the synaptic vesicle endocytosis (SVE).

The protein resides in the cytoplasmic vesicle. It localises to the clathrin-coated vesicle. Functionally, may act as a protein phosphatase and/or a lipid phosphatase. Co-chaperone that recruits HSPA8/HSC70 to clathrin-coated vesicles (CCVs) and promotes the ATP-dependent dissociation of clathrin from CCVs and participates in clathrin-mediated endocytosis of synaptic vesicles and their recycling and also in intracellular trafficking. Firstly, binds tightly to the clathrin cages, at a ratio of one DNAJC6 per clathrin triskelion. The HSPA8:ATP complex then binds to the clathrin-auxilin cage, initially at a ratio of one HSPA8 per triskelion leading to ATP hydrolysis stimulation and causing a conformational change in the HSPA8. This cycle is repeated three times to drive to a complex containing the clathrin-auxilin cage associated to three HSPA8:ADP complex. The ATP hydrolysis of the third HSPA8:ATP complex leads to a concerted dismantling of the cage into component triskelia. Then, dissociates from the released triskelia and be recycled to initiate another cycle of HSPA8's recruitment. Also acts during the early steps of clathrin-coated vesicle (CCV) formation through its interaction with the GTP bound form of DNM1. The polypeptide is Auxilin (Mus musculus (Mouse)).